The primary structure comprises 109 residues: Aquaporin-2 (109 aa).

Over 1 to 6 (SIAFSR) the chain is Cytoplasmic. The helical transmembrane segment at 7–27 (AVFSEFLATLLFVFFGLGSAL) threads the bilayer. Residues 28–35 (NWPQALPS) lie on the Extracellular side of the membrane. Residues 36-54 (VLQIAMAFGLAIGTLVQTL) traverse the membrane as a helical segment. The Cytoplasmic portion of the chain corresponds to 55 to 59 (GHISG). The segment at residues 60 to 69 (AHINPAVTVA) is an intramembrane region (discontinuously helical). The NPA 1 motif lies at 63–65 (NPA). The Cytoplasmic segment spans residues 70–80 (CLVGCHVSFLR). A helical membrane pass occupies residues 81–102 (ATFYVAAQLLGAVAGAALLHEL). The Extracellular segment spans residues 103–109 (TPPDIRG).

The protein belongs to the MIP/aquaporin (TC 1.A.8) family. In terms of assembly, homotetramer. In terms of processing, serine phosphorylation is necessary and sufficient for expression at the apical membrane. Endocytosis is not phosphorylation-dependent. Post-translationally, N-glycosylated.

Its subcellular location is the apical cell membrane. It is found in the basolateral cell membrane. It localises to the cell membrane. The protein resides in the cytoplasmic vesicle membrane. The protein localises to the golgi apparatus. Its subcellular location is the trans-Golgi network membrane. The catalysed reaction is H2O(in) = H2O(out). It catalyses the reaction glycerol(in) = glycerol(out). Functionally, forms a water-specific channel that provides the plasma membranes of renal collecting duct with high permeability to water, thereby permitting water to move in the direction of an osmotic gradient. Plays an essential role in renal water homeostasis. Could also be permeable to glycerol. In Amblysomus hottentotus (Hottentot golden mole), this protein is Aquaporin-2.